Here is a 156-residue protein sequence, read N- to C-terminus: Ribosomal RNA large subunit methyltransferase H (156 aa).

S-adenosyl-L-methionine-binding positions include Leu-73, Gly-104, and 123–128; that span reads LSALTL.

Belongs to the RNA methyltransferase RlmH family. In terms of assembly, homodimer.

The protein resides in the cytoplasm. The enzyme catalyses pseudouridine(1915) in 23S rRNA + S-adenosyl-L-methionine = N(3)-methylpseudouridine(1915) in 23S rRNA + S-adenosyl-L-homocysteine + H(+). Functionally, specifically methylates the pseudouridine at position 1915 (m3Psi1915) in 23S rRNA. The protein is Ribosomal RNA large subunit methyltransferase H of Shewanella sediminis (strain HAW-EB3).